The chain runs to 1073 residues: Carbamoyl phosphate synthase large chain (1073 aa).

A carboxyphosphate synthetic domain region spans residues 2–403 (PKRTDIKSIL…SLQKALRGLE (402 aa)). The ATP site is built by arginine 129, arginine 169, glycine 175, glycine 176, glutamate 208, leucine 210, glutamate 215, glycine 241, isoleucine 242, histidine 243, glutamine 285, and glutamate 299. Residues 133–328 (DVAMKKIGLE…IAKVAAKLAV (196 aa)) form the ATP-grasp 1 domain. Mg(2+)-binding residues include glutamine 285, glutamate 299, and asparagine 301. Positions 285, 299, and 301 each coordinate Mn(2+). The tract at residues 404-553 (VGATGFDPKV…YSTYEEECEA (150 aa)) is oligomerization domain. The segment at 554 to 936 (NPSTDREKIM…AFAKAQLGSN (383 aa)) is carbamoyl phosphate synthetic domain. The 192-residue stretch at 679-870 (QHAVERLKLK…LAKVAARVMA (192 aa)) folds into the ATP-grasp 2 domain. ATP contacts are provided by arginine 715, histidine 754, leucine 756, glutamate 761, glycine 786, valine 787, histidine 788, serine 789, glutamine 829, and glutamate 841. Glutamine 829, glutamate 841, and asparagine 843 together coordinate Mg(2+). Mn(2+) is bound by residues glutamine 829, glutamate 841, and asparagine 843. The region spanning 937-1073 (STMKKHGRAL…SVQEMHAQIK (137 aa)) is the MGS-like domain. The segment at 937-1073 (STMKKHGRAL…SVQEMHAQIK (137 aa)) is allosteric domain.

Belongs to the CarB family. Composed of two chains; the small (or glutamine) chain promotes the hydrolysis of glutamine to ammonia, which is used by the large (or ammonia) chain to synthesize carbamoyl phosphate. Tetramer of heterodimers (alpha,beta)4. It depends on Mg(2+) as a cofactor. Mn(2+) serves as cofactor.

The catalysed reaction is hydrogencarbonate + L-glutamine + 2 ATP + H2O = carbamoyl phosphate + L-glutamate + 2 ADP + phosphate + 2 H(+). It catalyses the reaction hydrogencarbonate + NH4(+) + 2 ATP = carbamoyl phosphate + 2 ADP + phosphate + 2 H(+). Its pathway is amino-acid biosynthesis; L-arginine biosynthesis; carbamoyl phosphate from bicarbonate: step 1/1. The protein operates within pyrimidine metabolism; UMP biosynthesis via de novo pathway; (S)-dihydroorotate from bicarbonate: step 1/3. Functionally, large subunit of the glutamine-dependent carbamoyl phosphate synthetase (CPSase). CPSase catalyzes the formation of carbamoyl phosphate from the ammonia moiety of glutamine, carbonate, and phosphate donated by ATP, constituting the first step of 2 biosynthetic pathways, one leading to arginine and/or urea and the other to pyrimidine nucleotides. The large subunit (synthetase) binds the substrates ammonia (free or transferred from glutamine from the small subunit), hydrogencarbonate and ATP and carries out an ATP-coupled ligase reaction, activating hydrogencarbonate by forming carboxy phosphate which reacts with ammonia to form carbamoyl phosphate. The protein is Carbamoyl phosphate synthase large chain of Escherichia coli (strain K12).